The chain runs to 596 residues: Nitrite reductase (596 aa).

An N-terminal signal peptide occupies residues 1–29 (MRQRTPFARPGLLASAALALVLGPLAASA). Residues 30–76 (QEQVAPPKDPAAALEDHKTRTDNRYEPSLDNLAQQDVAAPGAPEGVS) are N-terminal tail. Residue His-46 coordinates heme c. Heme d1-binding residues include Tyr-54 and Ser-57. A Cytochrome c domain is found at 77–162 (ALSDAQYNEA…ANYLLLDPAA (86 aa)). Positions 94, 97, 98, 108, and 122 each coordinate heme c. Heme d1 contacts are provided by Trp-138, Arg-203, His-229, Arg-232, Arg-245, Arg-272, Tyr-292, Arg-420, Gln-536, and Thr-583. A D1-heme domain region spans residues 163-596 (PPEFGMKEMR…NVYNTMTDTY (434 aa)).

In terms of assembly, homodimer. It depends on heme c as a cofactor. The cofactor is heme.

The protein localises to the periplasm. It carries out the reaction nitric oxide + Fe(III)-[cytochrome c] + H2O = Fe(II)-[cytochrome c] + nitrite + 2 H(+). The enzyme catalyses A + NH4(+) + H2O = hydroxylamine + AH2 + H(+). The sequence is that of Nitrite reductase (nirS) from Paracoccus pantotrophus (Thiosphaera pantotropha).